A 330-amino-acid polypeptide reads, in one-letter code: Ketol-acid reductoisomerase (NADP(+)) (330 aa).

In terms of domain architecture, KARI N-terminal Rossmann spans 1 to 181 (MKVFYDSDFK…GLSRAGVIQT (181 aa)). NADP(+)-binding positions include 24–27 (YGSQ), R47, S52, and 82–85 (DELQ). Residue H107 is part of the active site. An NADP(+)-binding site is contributed by G133. One can recognise a KARI C-terminal knotted domain in the interval 182–327 (TFKEETETDL…AKLRKMCGLE (146 aa)). Residues D190, E194, E226, and E230 each contribute to the Mg(2+) site. S251 lines the substrate pocket.

This sequence belongs to the ketol-acid reductoisomerase family. Requires Mg(2+) as cofactor.

It carries out the reaction (2R)-2,3-dihydroxy-3-methylbutanoate + NADP(+) = (2S)-2-acetolactate + NADPH + H(+). The catalysed reaction is (2R,3R)-2,3-dihydroxy-3-methylpentanoate + NADP(+) = (S)-2-ethyl-2-hydroxy-3-oxobutanoate + NADPH + H(+). Its pathway is amino-acid biosynthesis; L-isoleucine biosynthesis; L-isoleucine from 2-oxobutanoate: step 2/4. It participates in amino-acid biosynthesis; L-valine biosynthesis; L-valine from pyruvate: step 2/4. Involved in the biosynthesis of branched-chain amino acids (BCAA). Catalyzes an alkyl-migration followed by a ketol-acid reduction of (S)-2-acetolactate (S2AL) to yield (R)-2,3-dihydroxy-isovalerate. In the isomerase reaction, S2AL is rearranged via a Mg-dependent methyl migration to produce 3-hydroxy-3-methyl-2-ketobutyrate (HMKB). In the reductase reaction, this 2-ketoacid undergoes a metal-dependent reduction by NADPH to yield (R)-2,3-dihydroxy-isovalerate. This Methanococcus maripaludis (strain C7 / ATCC BAA-1331) protein is Ketol-acid reductoisomerase (NADP(+)).